The following is a 917-amino-acid chain: Hexokinase HKDC1 (917 aa).

Residues 1–20 (MFAVHLMAFYFSKLKEDQIK) form a mitochondrial-binding peptide (MBP) region. Hexokinase domains lie at 16–458 (EDQI…MVTA) and 464–905 (QAQR…LITA). Residues arginine 30 and 84 to 89 (DLGGSK) contribute to the ATP site. The interval 73-207 (DGSENGEFLS…DMDVDILALV (135 aa)) is hexokinase small subdomain 1. 84 to 91 (DLGGSKFR) contacts D-glucose 6-phosphate. D-glucose contacts are provided by residues serine 155, 172 to 173 (TK), and 208 to 209 (ND). The tract at residues 208 to 447 (NDTVGTMMTC…CDVRFLLSES (240 aa)) is hexokinase large subdomain 1. The D-glucose 6-phosphate site is built by aspartate 209 and threonine 232. Residues asparagine 235, glutamate 260, and 291–294 (QLFE) contribute to the D-glucose site. 413–415 (DGT) lines the D-glucose 6-phosphate pocket. ATP is bound at residue 425 to 426 (KR). Residues serine 449 and 532–536 (DLGGT) contribute to the D-glucose 6-phosphate site. Residues 521 to 654 (DGTEKGKFLA…EFDLDIVAVV (134 aa)) are hexokinase small subdomain 2. Residue 532–537 (DLGGTN) coordinates ATP. Residues 602 to 603 (SF), 619 to 620 (TK), and 655 to 656 (ND) contribute to the D-glucose site. A hexokinase large subdomain 2 region spans residues 655–894 (NDTVGTMMTC…CDVTFMLSED (240 aa)). Positions 656 and 679 each coordinate D-glucose 6-phosphate. Residue threonine 679 coordinates ATP. D-glucose contacts are provided by residues 681–682 (SN), glutamate 707, and glutamate 741. ATP contacts are provided by residues 746–747 (GM), 783–787 (TKFLS), and 862–866 (TLYKL). Residues 860-862 (DGT) and serine 896 contribute to the D-glucose 6-phosphate site.

This sequence belongs to the hexokinase family. In terms of tissue distribution, widely expressed. Highly expressed in the brush border, surface epithelium and the myenteric plexus of the small and large intestines; the acinar centrocytes and interlobular ducts of the pancreas; and the alveolar macrophages in the lungs (at protein level). Present at moderate level in the thyroid follicular epithelium (at protein level).

The protein resides in the cytoplasm. It is found in the mitochondrion membrane. Its subcellular location is the photoreceptor inner segment. It carries out the reaction a D-hexose + ATP = a D-hexose 6-phosphate + ADP + H(+). The enzyme catalyses D-glucose + ATP = D-glucose 6-phosphate + ADP + H(+). It functions in the pathway carbohydrate metabolism; hexose metabolism. Its pathway is carbohydrate degradation; glycolysis; D-glyceraldehyde 3-phosphate and glycerone phosphate from D-glucose: step 1/4. In terms of biological role, catalyzes the phosphorylation of hexose to hexose 6-phosphate, although at very low level compared to other hexokinases. Has low glucose phosphorylating activity compared to other hexokinases. Involved in glucose homeostasis and hepatic lipid accumulation. Required to maintain whole-body glucose homeostasis during pregnancy; however additional evidences are required to confirm this role. The chain is Hexokinase HKDC1 from Homo sapiens (Human).